The primary structure comprises 554 residues: uncharacterized protein (554 aa).

This is an uncharacterized protein from Saccharomyces cerevisiae (strain ATCC 204508 / S288c) (Baker's yeast).